Here is a 248-residue protein sequence, read N- to C-terminus: Aspartate/glutamate leucyltransferase (248 aa).

This sequence belongs to the R-transferase family. Bpt subfamily.

It localises to the cytoplasm. The catalysed reaction is N-terminal L-glutamyl-[protein] + L-leucyl-tRNA(Leu) = N-terminal L-leucyl-L-glutamyl-[protein] + tRNA(Leu) + H(+). It carries out the reaction N-terminal L-aspartyl-[protein] + L-leucyl-tRNA(Leu) = N-terminal L-leucyl-L-aspartyl-[protein] + tRNA(Leu) + H(+). In terms of biological role, functions in the N-end rule pathway of protein degradation where it conjugates Leu from its aminoacyl-tRNA to the N-termini of proteins containing an N-terminal aspartate or glutamate. This is Aspartate/glutamate leucyltransferase from Methylorubrum populi (strain ATCC BAA-705 / NCIMB 13946 / BJ001) (Methylobacterium populi).